A 189-amino-acid polypeptide reads, in one-letter code: ATP-dependent protease subunit HslV (189 aa).

Thr12 is a catalytic residue. Na(+) is bound by residues Ala172, Cys175, and Thr178.

The protein belongs to the peptidase T1B family. HslV subfamily. As to quaternary structure, a double ring-shaped homohexamer of HslV is capped on each side by a ring-shaped HslU homohexamer. The assembly of the HslU/HslV complex is dependent on binding of ATP.

Its subcellular location is the cytoplasm. The enzyme catalyses ATP-dependent cleavage of peptide bonds with broad specificity.. With respect to regulation, allosterically activated by HslU binding. Functionally, protease subunit of a proteasome-like degradation complex believed to be a general protein degrading machinery. The chain is ATP-dependent protease subunit HslV from Anaplasma phagocytophilum (strain HZ).